A 131-amino-acid chain; its full sequence is Peptide methionine sulfoxide reductase MsrB (131 aa).

Residues 8–130 (LDEWRSMLDP…NSVCIDLRPR (123 aa)) enclose the MsrB domain. Cysteine 47, cysteine 50, cysteine 96, and cysteine 99 together coordinate Zn(2+). Cysteine 119 acts as the Nucleophile in catalysis.

The protein belongs to the MsrB Met sulfoxide reductase family. The cofactor is Zn(2+).

It catalyses the reaction L-methionyl-[protein] + [thioredoxin]-disulfide + H2O = L-methionyl-(R)-S-oxide-[protein] + [thioredoxin]-dithiol. The chain is Peptide methionine sulfoxide reductase MsrB from Pseudomonas putida (strain ATCC 700007 / DSM 6899 / JCM 31910 / BCRC 17059 / LMG 24140 / F1).